Reading from the N-terminus, the 256-residue chain is Ubiquinone/menaquinone biosynthesis C-methyltransferase UbiE (256 aa).

Residues 1-12 are compositionally biased toward basic and acidic residues; sequence MNDQRKGDHAEP. Residues 1–23 form a disordered region; that stretch reads MNDQRKGDHAEPTTHFGYQDVPE. S-adenosyl-L-methionine is bound by residues T79, D100, and 128–129; that span reads DA.

The protein belongs to the class I-like SAM-binding methyltransferase superfamily. MenG/UbiE family.

It carries out the reaction a 2-demethylmenaquinol + S-adenosyl-L-methionine = a menaquinol + S-adenosyl-L-homocysteine + H(+). The enzyme catalyses a 2-methoxy-6-(all-trans-polyprenyl)benzene-1,4-diol + S-adenosyl-L-methionine = a 5-methoxy-2-methyl-3-(all-trans-polyprenyl)benzene-1,4-diol + S-adenosyl-L-homocysteine + H(+). The protein operates within quinol/quinone metabolism; menaquinone biosynthesis; menaquinol from 1,4-dihydroxy-2-naphthoate: step 2/2. Its pathway is cofactor biosynthesis; ubiquinone biosynthesis. Its function is as follows. Methyltransferase required for the conversion of demethylmenaquinol (DMKH2) to menaquinol (MKH2) and the conversion of 2-polyprenyl-6-methoxy-1,4-benzoquinol (DDMQH2) to 2-polyprenyl-3-methyl-6-methoxy-1,4-benzoquinol (DMQH2). This Pseudomonas putida (strain GB-1) protein is Ubiquinone/menaquinone biosynthesis C-methyltransferase UbiE.